The following is a 96-amino-acid chain: Class I hydrophobin 3 (96 aa).

An N-terminal signal peptide occupies residues 1–18; sequence MQFAKIASVLAMAAAAVA. Intrachain disulfides connect Cys43–Cys72, Cys51–Cys66, Cys52–Cys57, and Cys73–Cys92.

Belongs to the fungal hydrophobin family.

Its subcellular location is the secreted. It localises to the cell wall. Aerial growth, conidiation, and dispersal of filamentous fungi in the environment rely upon a capability of their secreting small amphipathic proteins called hydrophobins (HPBs) with low sequence identity. Class I can self-assemble into an outermost layer of rodlet bundles on aerial cell surfaces, conferring cellular hydrophobicity that supports fungal growth, development and dispersal; whereas Class II form highly ordered films at water-air interfaces through intermolecular interactions but contribute nothing to the rodlet structure. Does not seem to be important for the ability to cause seedling disease. In Gibberella moniliformis (Maize ear and stalk rot fungus), this protein is Class I hydrophobin 3.